We begin with the raw amino-acid sequence, 72 residues long: Translation initiation factor IF-1 (72 aa).

Positions 1-72 (MSKEEVLEFS…TKGRITYRYK (72 aa)) constitute an S1-like domain.

This sequence belongs to the IF-1 family. Component of the 30S ribosomal translation pre-initiation complex which assembles on the 30S ribosome in the order IF-2 and IF-3, IF-1 and N-formylmethionyl-tRNA(fMet); mRNA recruitment can occur at any time during PIC assembly.

Its subcellular location is the cytoplasm. Functionally, one of the essential components for the initiation of protein synthesis. Stabilizes the binding of IF-2 and IF-3 on the 30S subunit to which N-formylmethionyl-tRNA(fMet) subsequently binds. Helps modulate mRNA selection, yielding the 30S pre-initiation complex (PIC). Upon addition of the 50S ribosomal subunit IF-1, IF-2 and IF-3 are released leaving the mature 70S translation initiation complex. This is Translation initiation factor IF-1 from Bartonella quintana (strain Toulouse) (Rochalimaea quintana).